The chain runs to 240 residues: Prolactin-8A6 (240 aa).

Residues 1–30 (MALLLSQPHFSGPLLLLVVSNLLLWEKAAS) form the signal peptide. 3 cysteine pairs are disulfide-bonded: Cys-34–Cys-41, Cys-101–Cys-216, and Cys-233–Cys-240. The N-linked (GlcNAc...) asparagine glycan is linked to Asn-212.

This sequence belongs to the somatotropin/prolactin family. In terms of tissue distribution, expressed specifically in the spongiotrophoblast and trophoblast giant cells from the junctional zone of the chorioallantoic placenta.

The protein localises to the secreted. This Mus musculus (Mouse) protein is Prolactin-8A6 (Prl8a6).